We begin with the raw amino-acid sequence, 215 residues long: UPF0502 protein Shal_1801 (215 aa).

Belongs to the UPF0502 family.

The polypeptide is UPF0502 protein Shal_1801 (Shewanella halifaxensis (strain HAW-EB4)).